Consider the following 370-residue polypeptide: tRNA-specific 2-thiouridylase MnmA (370 aa).

ATP contacts are provided by residues 8–15 (GMSGGVDS) and M34. The tract at residues 104 to 106 (NPD) is interaction with target base in tRNA. C109 acts as the Nucleophile in catalysis. C109 and C202 are joined by a disulfide. G134 contributes to the ATP binding site. The segment at 152-154 (KDQ) is interaction with tRNA. Residue C202 is the Cysteine persulfide intermediate of the active site. The tract at residues 309–310 (RY) is interaction with tRNA.

The protein belongs to the MnmA/TRMU family.

Its subcellular location is the cytoplasm. The enzyme catalyses S-sulfanyl-L-cysteinyl-[protein] + uridine(34) in tRNA + AH2 + ATP = 2-thiouridine(34) in tRNA + L-cysteinyl-[protein] + A + AMP + diphosphate + H(+). Its function is as follows. Catalyzes the 2-thiolation of uridine at the wobble position (U34) of tRNA, leading to the formation of s(2)U34. The chain is tRNA-specific 2-thiouridylase MnmA from Metamycoplasma arthritidis (strain 158L3-1) (Mycoplasma arthritidis).